Consider the following 95-residue polypeptide: Protein TusB (95 aa).

Belongs to the DsrH/TusB family. Heterohexamer, formed by a dimer of trimers. The hexameric TusBCD complex contains 2 copies each of TusB, TusC and TusD. The TusBCD complex interacts with TusE.

It localises to the cytoplasm. Functionally, part of a sulfur-relay system required for 2-thiolation of 5-methylaminomethyl-2-thiouridine (mnm(5)s(2)U) at tRNA wobble positions. The chain is Protein TusB from Enterobacter sp. (strain 638).